The sequence spans 1073 residues: Ring-infected erythrocyte surface antigen (1073 aa).

Positions Met1–Asn65 are cleaved as a signal peptide. Asn71 carries an N-linked (GlcNAc...) asparagine glycan. A compositionally biased stretch (acidic residues) spans Asp428–Val444. Positions Asp428–Ala514 are disordered. A tandem repeats 1 region spans residues Glu436 to Ala504. Residues Asp445–Asp456 show a composition bias toward basic and acidic residues. A compositionally biased stretch (acidic residues) spans Glu457 to Val470. Basic and acidic residues predominate over residues Ala476–Glu502. Residues Asp521 to Asp589 enclose the J domain. 3 N-linked (GlcNAc...) asparagine glycosylation sites follow: Asn639, Asn773, and Asn777. The interval Asn891–Glu1073 is tandem repeats 2. A compositionally biased stretch (basic and acidic residues) spans Glu894–His930. Residues Glu894–Glu1073 form a disordered region. The span at Asp931–Glu1073 shows a compositional bias: acidic residues.

The Tyr residues in the variant tetrameric sequences in the RESA repeat are possibly phosphorylated (by homology with band 3).

It is found in the cell membrane. In terms of biological role, may disrupt the normal intermolecular interactions of the cytoplasmic domain of band 3 and thereby facilitate the invagination of the red cell membrane which is necessary for the formation of the parasitophorous vacuole. This is Ring-infected erythrocyte surface antigen (RESA) from Plasmodium falciparum (isolate FC27 / Papua New Guinea).